A 629-amino-acid polypeptide reads, in one-letter code: UvrABC system protein C (629 aa).

Residues 12-91 form the GIY-YIG domain; it reads DRPGCYLFKD…IKKHKPKYNI (80 aa). Residues 200–235 form the UVR domain; that stretch reads QEVLERLRARMEQAAERLEFERAAELRDQIRAIEKV.

Belongs to the UvrC family. As to quaternary structure, interacts with UvrB in an incision complex.

It is found in the cytoplasm. Its function is as follows. The UvrABC repair system catalyzes the recognition and processing of DNA lesions. UvrC both incises the 5' and 3' sides of the lesion. The N-terminal half is responsible for the 3' incision and the C-terminal half is responsible for the 5' incision. The protein is UvrABC system protein C of Symbiobacterium thermophilum (strain DSM 24528 / JCM 14929 / IAM 14863 / T).